A 311-amino-acid chain; its full sequence is Olfactory receptor 10D1B (311 aa).

The Extracellular portion of the chain corresponds to 1-24; sequence MKNLSVVTQFILLGIPHTEGVETM. A helical transmembrane segment spans residues 25–45; it reads LFVLFFSFYIFTLVGNLLILL. Topologically, residues 46-54 are cytoplasmic; sequence AIVSSSRLH. A helical transmembrane segment spans residues 55 to 75; the sequence is TPMYFFLCQLSVCDIFFPSVS. Over 76–95 the chain is Extracellular; the sequence is SPKMLFYLSGNTPAISYAGC. A disulfide bridge links Cys-95 with Cys-187. Residues 96-116 traverse the membrane as a helical segment; sequence VSQLFFYHFLGGTECFLYTVM. Topologically, residues 117–137 are cytoplasmic; that stretch reads AYDRFVAICYPLRYSVIMSHR. A helical membrane pass occupies residues 138 to 158; sequence ICAFLAMGTAVFGCIHSTFLT. Residues 159 to 192 lie on the Extracellular side of the membrane; sequence TLTFQLPYCGPKDVNYYFCDIPVVMKLACADTST. A helical transmembrane segment spans residues 193-213; sequence LEMVGFISVGLMPLSCFFFIL. The Cytoplasmic segment spans residues 214 to 237; that stretch reads TSYSCIVRSILQIRSTEGRHRAFS. A helical transmembrane segment spans residues 238–258; it reads TCSAHFTAILLFYMPVIFIYL. Over 259–271 the chain is Extracellular; sequence RPTPSPWLDATVQ. The helical transmembrane segment at 272 to 288 threads the bilayer; the sequence is ILNNLVTPMLNPLIYSL. Residues 289–311 are Cytoplasmic-facing; it reads RNKEVKSSLWTVLHLLCFLPKHL.

This sequence belongs to the G-protein coupled receptor 1 family.

It localises to the cell membrane. In terms of biological role, odorant receptor. This Mus musculus (Mouse) protein is Olfactory receptor 10D1B.